The sequence spans 519 residues: Sorting nexin-2 (519 aa).

Residues 30-50 (STVSTLESSPSSPEPASLPAE) show a composition bias toward low complexity. The segment at 30–62 (STVSTLESSPSSPEPASLPAEDISANSNGSKPV) is disordered. At Ser97 the chain carries Phosphoserine. Thr101 and Thr104 each carry phosphothreonine. Residues Ser117 and Ser119 each carry the phosphoserine modification. The 130-residue stretch at 140-269 (FDIEIGVSDP…QFLESSELPR (130 aa)) folds into the PX domain. Positions 183, 185, 211, and 235 each coordinate a 1,2-diacyl-sn-glycero-3-phospho-(1D-myo-inositol-3-phosphate). Ser185 bears the Phosphoserine mark. Residues 260–519 (QFLESSELPR…AFLPEAKAIA (260 aa)) form an interaction with RhoG region. Position 277 is a phosphoserine (Ser277). Residues 278 to 295 (GAGILRMVNKAADAVNKM) form a membrane-binding amphipathic helix region. Residues 299-519 (MNESDAWFEE…AFLPEAKAIA (221 aa)) form the BAR domain. N6-acetyllysine is present on Lys469.

It belongs to the sorting nexin family. As to quaternary structure, predominantly forms heterodimers with BAR domain-containing sorting nexins SNX5, SNX6 and SNX32; can self-associate to form homodimers. The heterodimers are proposed to self-assemble into helical arrays on the membrane to stabilize and expand local membrane curvature underlying endosomal tubule formation. Thought to be a component of the originally described retromer complex (also called SNX-BAR retromer) which is a pentamer containing the heterotrimeric retromer cargo-selective complex (CSC), also described as vacuolar protein sorting subcomplex (VPS), and a heterodimeric membrane-deforming subcomplex formed between SNX1 or SNX2 and SNX5 or SNX6 (also called SNX-BAR subcomplex); the respective CSC and SNX-BAR subcomplexes associate with low affinity. Interacts with SNX5, SNX6, SNX32, VPS26A, VPS29, VPS35, FNBP1, KALRN, RHOG (GDP-bound form).

Its subcellular location is the early endosome membrane. It localises to the cell projection. The protein resides in the lamellipodium. Functionally, involved in several stages of intracellular trafficking. Interacts with membranes containing phosphatidylinositol 3-phosphate (PtdIns(3P)) or phosphatidylinositol 3,5-bisphosphate (PtdIns(3,5)P2). Acts in part as component of the retromer membrane-deforming SNX-BAR subcomplex. The SNX-BAR retromer mediates retrograde transport of cargo proteins from endosomes to the trans-Golgi network (TGN) and is involved in endosome-to-plasma membrane transport for cargo protein recycling. The SNX-BAR subcomplex functions to deform the donor membrane into a tubular profile called endosome-to-TGN transport carrier (ETC). Can sense membrane curvature and has in vitro vesicle-to-membrane remodeling activity. Required for retrograde endosome-to-TGN transport of TGN38. Promotes KALRN- and RHOG-dependent but retromer-independent membrane remodeling such as lamellipodium formation; the function is dependent on GEF activity of KALRN. This is Sorting nexin-2 (Snx2) from Mus musculus (Mouse).